The sequence spans 520 residues: Intermediate filament protein ON3 (520 aa).

A compositionally biased stretch (low complexity) spans 1 to 27 (MSYTKKTSYSVKSSSSGSVPRSFSSMS). Residues 1 to 33 (MSYTKKTSYSVKSSSSGSVPRSFSSMSYSGPSV) are disordered. The tract at residues 1–108 (MSYTKKTSYS…DPNIQVVRTQ (108 aa)) is head. Residues 109–144 (EKEQMKSLNNRFASFIDKVRFLEQQNKMLETKWSLL) are coil 1A. The IF rod domain maps to 109-420 (EKEQMKSLNN…KLLEGEEDRL (312 aa)). Residues 145 to 157 (QNQTATRSNIDAM) form a linker 1 region. Residues 158-253 (FEAYINNLRR…QIFEEEIREL (96 aa)) are coil 1B. Positions 254-273 (QSQIKDTSVVVEMDNSRNLD) are linker 12. The tract at residues 274 to 420 (MDAIVAEVRA…KLLEGEEDRL (147 aa)) is coil 2. The tail stretch occupies residues 421 to 520 (LSGIKSVNIS…VSESSEVVQD (100 aa)).

This sequence belongs to the intermediate filament family.

Its function is as follows. One of the non-neuronal predominant intermediate filament proteins of the visual pathway. The chain is Intermediate filament protein ON3 from Carassius auratus (Goldfish).